A 114-amino-acid polypeptide reads, in one-letter code: Large ribosomal subunit protein P2v (114 aa).

The interval 74-114 is disordered; the sequence is VASGGGGGAAPAAEPASVESKKKEEEKEESEDDGGMMSLFD. S103 bears the Phosphoserine mark.

It belongs to the eukaryotic ribosomal protein P1/P2 family. As to quaternary structure, P1 and P2 exist as dimers at the large ribosomal subunit. In terms of processing, phosphorylated.

In terms of biological role, plays an important role in the elongation step of protein synthesis. The sequence is that of Large ribosomal subunit protein P2v (RPP2E) from Arabidopsis thaliana (Mouse-ear cress).